The chain runs to 196 residues: GTP cyclohydrolase 1 (196 aa).

Zn(2+) contacts are provided by cysteine 86, histidine 89, and cysteine 158.

This sequence belongs to the GTP cyclohydrolase I family. As to quaternary structure, homomer.

The catalysed reaction is GTP + H2O = 7,8-dihydroneopterin 3'-triphosphate + formate + H(+). It functions in the pathway cofactor biosynthesis; 7,8-dihydroneopterin triphosphate biosynthesis; 7,8-dihydroneopterin triphosphate from GTP: step 1/1. The chain is GTP cyclohydrolase 1 from Clostridium botulinum (strain Loch Maree / Type A3).